The sequence spans 223 residues: Deoxyribose-phosphate aldolase (223 aa).

The Proton donor/acceptor role is filled by D92. K154 functions as the Schiff-base intermediate with acetaldehyde in the catalytic mechanism. Catalysis depends on K182, which acts as the Proton donor/acceptor.

It belongs to the DeoC/FbaB aldolase family. DeoC type 1 subfamily.

It localises to the cytoplasm. The catalysed reaction is 2-deoxy-D-ribose 5-phosphate = D-glyceraldehyde 3-phosphate + acetaldehyde. Its pathway is carbohydrate degradation; 2-deoxy-D-ribose 1-phosphate degradation; D-glyceraldehyde 3-phosphate and acetaldehyde from 2-deoxy-alpha-D-ribose 1-phosphate: step 2/2. In terms of biological role, catalyzes a reversible aldol reaction between acetaldehyde and D-glyceraldehyde 3-phosphate to generate 2-deoxy-D-ribose 5-phosphate. The sequence is that of Deoxyribose-phosphate aldolase from Haemophilus influenzae (strain PittEE).